A 423-amino-acid polypeptide reads, in one-letter code: UDP-N-acetylglucosamine 1-carboxyvinyltransferase 2 (423 aa).

23 to 24 provides a ligand contact to phosphoenolpyruvate; it reads KN. A UDP-N-acetyl-alpha-D-glucosamine-binding site is contributed by R93. The active-site Proton donor is the C117. Position 117 is a 2-(S-cysteinyl)pyruvic acid O-phosphothioketal (C117). Residues 122–126, D305, and I327 each bind UDP-N-acetyl-alpha-D-glucosamine; that span reads RPIDQ.

The protein belongs to the EPSP synthase family. MurA subfamily.

It localises to the cytoplasm. The catalysed reaction is phosphoenolpyruvate + UDP-N-acetyl-alpha-D-glucosamine = UDP-N-acetyl-3-O-(1-carboxyvinyl)-alpha-D-glucosamine + phosphate. It functions in the pathway cell wall biogenesis; peptidoglycan biosynthesis. Its function is as follows. Cell wall formation. Adds enolpyruvyl to UDP-N-acetylglucosamine. In Listeria monocytogenes serotype 4b (strain F2365), this protein is UDP-N-acetylglucosamine 1-carboxyvinyltransferase 2.